A 171-amino-acid chain; its full sequence is MLVNFILRCGLLLVTLSLAIAKHKQSSFTKSCYPRGTLSQAVDALYIKAAWLKATIPEDRIKNIRLLKKKTKKQFMKNCQFQEQLLSFFMEDVFGQLQLQGCKKIRFVEDFHSLRQKLSHCISCASSAREMKSITRMKRIFYRIGNKGIYKAISELDILLSWIKKLLESSQ.

Residues 1 to 21 (MLVNFILRCGLLLVTLSLAIA) form the signal peptide.

It belongs to the IL-10 family. Homodimer. In terms of tissue distribution, expressed in HVS transformed T-cells but not other T-cell lines or primary stimulated T-cells. Expressed in colonic T-cells including Th17 inflammatory T-cells; the expression is significantly increased in serum of patients with Crohn's disease (at protein level).

It is found in the secreted. Its function is as follows. May play a role in local mechanisms of mucosal immunity and seems to have a pro-inflammatory function. May play a role in inflammatory bowel disease. Activates STAT1 and STAT3, MAPK1/3 (ERK1/2), JUN and AKT. Induces expression of SOCS3, TNF-alpha and IL-8, secretion of IL-8 and IL-10 and surface expression of ICAM1. Decreases proliferation of intestinal epithelial cells. Is inhibited by heparin. This is Interleukin-26 (IL26) from Homo sapiens (Human).